A 1218-amino-acid polypeptide reads, in one-letter code: Protein STICHEL (1218 aa).

Residues 24–136 (AGRVLRDPGT…SDARNGGDSY (113 aa)) form a disordered region. Composition is skewed to polar residues over residues 32–46 (GTTS…SSRS), 54–73 (ASRN…SSTN), and 86–95 (WKTQKSSSEK). A Bipartite nuclear localization signal motif is present at residues 163 to 180 (RKSNVGSCKKKSKKKISS). 2 consecutive short sequence motifs (PEST) follow at residues 273-304 (RNPS…LPGR) and 425-449 (RSQD…ETIR). An ATP-binding site is contributed by 490–497 (GPRGTGKT). Positions 509, 518, 521, and 524 each coordinate Zn(2+). The stretch at 762 to 788 (EADMEGLKHALKLLSEAEKQLRVSNDR) forms a coiled coil. Positions 802–828 (MPSPGTTHTGSSRRQSSRATDDDPASV) are disordered. A compositionally biased stretch (polar residues) spans 804–819 (SPGTTHTGSSRRQSSR). 2 consecutive short sequence motifs (bipartite nuclear localization signal) follow at residues 1178–1195 (RRSK…SRRN) and 1196–1213 (RKSR…RKAE).

The protein belongs to the DnaX/STICHEL family. Interacts with BLT. Ubiquitous.

It is found in the nucleus. Its function is as follows. Acts as a key regulator of trichome branching through an endoreduplication-independent pathway. The chain is Protein STICHEL (STI) from Arabidopsis thaliana (Mouse-ear cress).